Here is a 610-residue protein sequence, read N- to C-terminus: ATP-dependent zinc metalloprotease FtsH (610 aa).

The Cytoplasmic segment spans residues 1-3 (MAK). A helical transmembrane segment spans residues 4–24 (NLMLWLVIAVVLMSIFQNFSA). The Extracellular portion of the chain corresponds to 25 to 97 (NNINNRKIDY…IIGAAPEEQS (73 aa)). A helical transmembrane segment spans residues 98-118 (FFTAIFISWFPMLLLIGVWVF). Residues 119–610 (FMRQMQVGGG…SNICTDDDNN (492 aa)) are Cytoplasmic-facing. 192-199 (GPPGTGKT) contributes to the ATP binding site. Position 414 (histidine 414) interacts with Zn(2+). Residue glutamate 415 is part of the active site. Histidine 418 and aspartate 492 together coordinate Zn(2+).

It in the central section; belongs to the AAA ATPase family. This sequence in the C-terminal section; belongs to the peptidase M41 family. As to quaternary structure, homohexamer. It depends on Zn(2+) as a cofactor.

The protein resides in the cell membrane. Its function is as follows. Acts as a processive, ATP-dependent zinc metallopeptidase for both cytoplasmic and membrane proteins. Plays a role in the quality control of integral membrane proteins. The sequence is that of ATP-dependent zinc metalloprotease FtsH from Buchnera aphidicola subsp. Baizongia pistaciae (strain Bp).